Here is a 277-residue protein sequence, read N- to C-terminus: 4-hydroxy-3-methylbut-2-enyl diphosphate reductase (277 aa).

Cys-12 lines the [4Fe-4S] cluster pocket. His-36 and His-70 together coordinate (2E)-4-hydroxy-3-methylbut-2-enyl diphosphate. Dimethylallyl diphosphate-binding residues include His-36 and His-70. Isopentenyl diphosphate contacts are provided by His-36 and His-70. Cys-92 provides a ligand contact to [4Fe-4S] cluster. His-120 serves as a coordination point for (2E)-4-hydroxy-3-methylbut-2-enyl diphosphate. His-120 provides a ligand contact to dimethylallyl diphosphate. An isopentenyl diphosphate-binding site is contributed by His-120. The active-site Proton donor is Glu-122. Thr-160 provides a ligand contact to (2E)-4-hydroxy-3-methylbut-2-enyl diphosphate. Cys-188 provides a ligand contact to [4Fe-4S] cluster. Ser-216, Ser-217, Asn-218, and Ser-260 together coordinate (2E)-4-hydroxy-3-methylbut-2-enyl diphosphate. Positions 216, 217, 218, and 260 each coordinate dimethylallyl diphosphate. The isopentenyl diphosphate site is built by Ser-216, Ser-217, Asn-218, and Ser-260.

It belongs to the IspH family. [4Fe-4S] cluster serves as cofactor.

The enzyme catalyses isopentenyl diphosphate + 2 oxidized [2Fe-2S]-[ferredoxin] + H2O = (2E)-4-hydroxy-3-methylbut-2-enyl diphosphate + 2 reduced [2Fe-2S]-[ferredoxin] + 2 H(+). The catalysed reaction is dimethylallyl diphosphate + 2 oxidized [2Fe-2S]-[ferredoxin] + H2O = (2E)-4-hydroxy-3-methylbut-2-enyl diphosphate + 2 reduced [2Fe-2S]-[ferredoxin] + 2 H(+). It participates in isoprenoid biosynthesis; dimethylallyl diphosphate biosynthesis; dimethylallyl diphosphate from (2E)-4-hydroxy-3-methylbutenyl diphosphate: step 1/1. Its pathway is isoprenoid biosynthesis; isopentenyl diphosphate biosynthesis via DXP pathway; isopentenyl diphosphate from 1-deoxy-D-xylulose 5-phosphate: step 6/6. In terms of biological role, catalyzes the conversion of 1-hydroxy-2-methyl-2-(E)-butenyl 4-diphosphate (HMBPP) into a mixture of isopentenyl diphosphate (IPP) and dimethylallyl diphosphate (DMAPP). Acts in the terminal step of the DOXP/MEP pathway for isoprenoid precursor biosynthesis. This chain is 4-hydroxy-3-methylbut-2-enyl diphosphate reductase, found in Sulfurovum sp. (strain NBC37-1).